Reading from the N-terminus, the 423-residue chain is MGMTIAEKILADHSEREEVKPGEIVMAKLDFVFGNDVTMPLAIKKFRELGVKRVFDRERIAIVLDHFTPNKDIKSAEQCKSSREFAKEMGIKWFFEGGSVGVEHCLLPELGLVLPGDLIIGADSHTCTYGALGAFATGVGSTDLAVAMATGEAWFRVPETMKFIYEGELQPYVTGKDLILHTIGDIGVNGALYKVMEFSGSVIEELSVEQRMTMSNMAIEAGAKTGIIEPDKKTLDYVKERAKRKFKVYKSDEDAKYYKVIEYDVTNWEPVVAFPHLPENTVPISKAAKMNIKIDQVFIGSCTNGRIEDLRMAAEILEGQKVAKWVRLIVIPCSPTVYWKALKEGLIEIFLEAGAVIGPPTCGPCLGGHMGVLASGERAVSTTNRNFVGRMGHPKSEVYLANPYVAAASAVLGRIASPEEVVK.

Residues Cys302, Cys362, and Cys365 each contribute to the [4Fe-4S] cluster site.

It belongs to the aconitase/IPM isomerase family. LeuC type 2 subfamily. Heterodimer of LeuC and LeuD. The cofactor is [4Fe-4S] cluster.

It catalyses the reaction (2R,3S)-3-isopropylmalate = (2S)-2-isopropylmalate. It participates in amino-acid biosynthesis; L-leucine biosynthesis; L-leucine from 3-methyl-2-oxobutanoate: step 2/4. Catalyzes the isomerization between 2-isopropylmalate and 3-isopropylmalate, via the formation of 2-isopropylmaleate. In Pyrococcus abyssi (strain GE5 / Orsay), this protein is 3-isopropylmalate dehydratase large subunit 1.